Consider the following 125-residue polypeptide: Neuraminyllactose-binding hemagglutinin (125 aa).

Residues 92–97 form an N-acetyl-neuraminyl-alpha(2,3)-lactose binding motif region; the sequence is KRTTQK.

Its subcellular location is the cell outer membrane. This chain is Neuraminyllactose-binding hemagglutinin (hpaA), found in Helicobacter acinonychis (Helicobacter acinonyx).